The primary structure comprises 173 residues: Small ribosomal subunit protein uS5 (173 aa).

The region spanning 17–80 is the S5 DRBM domain; the sequence is WQERVIQIRR…ADGKKQLIEV (64 aa).

It belongs to the universal ribosomal protein uS5 family. Part of the 30S ribosomal subunit. Contacts proteins S4 and S8.

Functionally, with S4 and S12 plays an important role in translational accuracy. Located at the back of the 30S subunit body where it stabilizes the conformation of the head with respect to the body. The chain is Small ribosomal subunit protein uS5 from Gloeothece citriformis (strain PCC 7424) (Cyanothece sp. (strain PCC 7424)).